Consider the following 668-residue polypeptide: MNPSTHVSSNGPTTPPHGPHTTFLPPTSPAPSTSSVAAATLCSPQRQAVSRYSGWSTEYTQWHSDLTTELLWHAHPRQVPMDEALAAAAAASYQVNPQHPANRYRHYEFQTLSLGTSEVDELLNCCAEETTCGGTQSTVLTNATNTTSCGGAVAGSSNVGPAGASAACDLDAELAGLETSAADFEQLRRLCAPLAIDTRCNLCAIISICLKQDCDQSWLLEYSLLCFKCSYAPRAALSTLIIMSEFTHLLQQHFSDLRIDDLFRHHVLTVFDFHLHFFINRCFEKQVGDAVDNENVTLNHLAVVRAMVMGEDTVPYNKPRRHPQQKQKNNPYHVEVPQELIDNFLEHSSPSRDRFVQLLFYMWAGTGVMSTTPLTELTHTKFARLDALSTASEREDARMMIEEEEDEEGGEKGGDDPGRHNGGGTSGGFSESTLKKNVGPIYLCPVPAFFTKNQTSTVCLLCELMACSYYDNVVLRELYRRVVSYCQNNVKMVDRIQLVLADLLRECTSPLGAAHEDVARCGLEAPTSPGGDSDYHGLSGVDGALARPDPVFCHVLRQAGVTGIYKHFFCDPQCAGNIRVTNEAVLFGRLHPHHVQEVKLAICHDNYYISRLPRRVWLCITLFKAFQITKRTYKGKVHLADFMRDFTQLLESCDIKLVDPTYVIDKYV.

Over residues 1–10 (MNPSTHVSSN) the composition is skewed to polar residues. The interval 1–35 (MNPSTHVSSNGPTTPPHGPHTTFLPPTSPAPSTSS) is disordered. Over residues 19–35 (PHTTFLPPTSPAPSTSS) the composition is skewed to low complexity. The Zn(2+) site is built by cysteine 200, cysteine 203, histidine 276, and cysteine 282. A zinc finger 1 region spans residues 200 to 282 (CNLCAIISIC…FHLHFFINRC (83 aa)). The interval 401 to 430 (IEEEEDEEGGEKGGDDPGRHNGGGTSGGFS) is disordered. The segment covering 410–419 (GEKGGDDPGR) has biased composition (basic and acidic residues). Zn(2+) is bound by residues cysteine 459, cysteine 462, histidine 567, and cysteine 574. The interval 459–574 (CLLCELMACS…YKHFFCDPQC (116 aa)) is zinc finger 2.

This sequence belongs to the herpesviridae UL32 protein family.

The protein resides in the host cytoplasm. It localises to the host nucleus. In terms of biological role, plays a role in efficient localization of neo-synthesized capsids to nuclear replication compartments, thereby controlling cleavage and packaging of virus genomic DNA. This Homo sapiens (Human) protein is Packaging protein UL32 homolog (UL52).